Reading from the N-terminus, the 29-residue chain is Brevinin-2Ra (29 aa).

Cys-23 and Cys-29 form a disulfide bridge.

In terms of tissue distribution, expressed by the skin glands.

It is found in the secreted. In terms of biological role, antimicrobial peptide. The chain is Brevinin-2Ra from Pelophylax ridibundus (Marsh frog).